The following is a 217-amino-acid chain: Probable GTP-binding protein EngB (217 aa).

Residues 27–201 (EGIEVAFAGR…REKLDTWFSE (175 aa)) form the EngB-type G domain. Residues 35–42 (GRSNAGKS), 62–66 (GRTQL), 80–83 (DLPG), 147–150 (TKAD), and 180–182 (FSS) each bind GTP. Ser-42 and Thr-64 together coordinate Mg(2+).

It belongs to the TRAFAC class TrmE-Era-EngA-EngB-Septin-like GTPase superfamily. EngB GTPase family. Mg(2+) serves as cofactor.

Functionally, necessary for normal cell division and for the maintenance of normal septation. The sequence is that of Probable GTP-binding protein EngB from Yersinia enterocolitica serotype O:8 / biotype 1B (strain NCTC 13174 / 8081).